Reading from the N-terminus, the 505-residue chain is Flagellin (505 aa).

This sequence belongs to the bacterial flagellin family.

It is found in the secreted. The protein resides in the bacterial flagellum. Its function is as follows. Flagellin is the subunit protein which polymerizes to form the filaments of bacterial flagella. The sequence is that of Flagellin (fliC) from Salmonella moscow.